A 324-amino-acid chain; its full sequence is Signal peptidase I (324 aa).

Residues 1–3 lie on the Periplasmic side of the membrane; that stretch reads MAN. The chain crosses the membrane as a helical span at residues 4–22; the sequence is MFALILVIATLVTGILWCV. Topologically, residues 23–58 are cytoplasmic; the sequence is DKFVFAPKRRARQAAAQTASGDALDNATLNKVAPKP. The chain crosses the membrane as a helical span at residues 59 to 77; the sequence is GWLETGASVFPVLAIVLIV. At 78–324 the chain is on the periplasmic side; the sequence is RSFLYEPFQI…VRLSRIGGIH (247 aa). Active-site residues include Ser91 and Lys146.

The protein belongs to the peptidase S26 family.

The protein resides in the cell inner membrane. The catalysed reaction is Cleavage of hydrophobic, N-terminal signal or leader sequences from secreted and periplasmic proteins.. In Salmonella typhi, this protein is Signal peptidase I (lepB).